Here is a 489-residue protein sequence, read N- to C-terminus: MFALTAYRLRCAAWLLATGIFLLLAGCSEAKAPTALERVQKEGVLRVITRNSPATYFQDRNGETGFEYELAKRFAERLGVELKIETADNLDDLYAQLSREGGPALAAAGLTPGREDDASVRYSHTYLDVTPQIIYRNGQQRPTRPEDLVGKRIMVLKGSSHAEQLAELKKQYPELKYEESDAVEVVDLLRMVDVGDIDLTLVDSNELAMNQVYFPNVRVAFDFGEARGLAWALPGGDDSLMNEVNAFLDQAKKEGLLQRLKDRYYGHVDVLGYVGAYTFAQHLQQRLPRYESHFKQSGKQLDTDWRLLAAIGYQESLWQPGATSKTGVRGLMMLTNRTAQAMGVSNRLDPKQSIQGGSKYFVQIRSELPESIKEPDRSWFALAAYNIGGAHLEDARKMAEKEGLNPNKWLDVKKMLPRLAQKQWYAKTRYGYARGGETVHFVQNVRRYYDILTWVTQPQMEGSQIAESGLHLPGVNKTRPEEDSGDEKL.

An N-terminal signal peptide occupies residues 1–32; that stretch reads MFALTAYRLRCAAWLLATGIFLLLAGCSEAKA. A non-LT domain region spans residues 33–268; the sequence is PTALERVQKE…RLKDRYYGHV (236 aa). An LT domain region spans residues 269-489; sequence DVLGYVGAYT…PEEDSGDEKL (221 aa). Residue glutamate 315 is part of the active site. Positions 466–489 are disordered; sequence AESGLHLPGVNKTRPEEDSGDEKL. Positions 478–489 are enriched in basic and acidic residues; sequence TRPEEDSGDEKL.

The protein in the N-terminal section; belongs to the bacterial solute-binding protein 3 family. This sequence in the C-terminal section; belongs to the transglycosylase Slt family.

It localises to the cell outer membrane. The enzyme catalyses Exolytic cleavage of the (1-&gt;4)-beta-glycosidic linkage between N-acetylmuramic acid (MurNAc) and N-acetylglucosamine (GlcNAc) residues in peptidoglycan, from either the reducing or the non-reducing ends of the peptidoglycan chains, with concomitant formation of a 1,6-anhydrobond in the MurNAc residue.. Its function is as follows. Murein-degrading enzyme that degrades murein glycan strands and insoluble, high-molecular weight murein sacculi, with the concomitant formation of a 1,6-anhydromuramoyl product. Lytic transglycosylases (LTs) play an integral role in the metabolism of the peptidoglycan (PG) sacculus. Their lytic action creates space within the PG sacculus to allow for its expansion as well as for the insertion of various structures such as secretion systems and flagella. This is Membrane-bound lytic murein transglycosylase F from Pseudomonas aeruginosa (strain UCBPP-PA14).